The following is a 310-amino-acid chain: Protein-L-isoaspartate O-methyltransferase (310 aa).

Disordered stretches follow at residues 1–46 (MSGE…DKPA) and 60–79 (ALPGTAAAKPATAPKPTVLK). Positions 14-34 (EDLKRAPRKSEVRSGSGERHA) are enriched in basic and acidic residues. Low complexity predominate over residues 35 to 46 (ASAVPKAADKPA). Residue Ser157 is part of the active site.

It belongs to the methyltransferase superfamily. L-isoaspartyl/D-aspartyl protein methyltransferase family.

The protein localises to the cytoplasm. The catalysed reaction is [protein]-L-isoaspartate + S-adenosyl-L-methionine = [protein]-L-isoaspartate alpha-methyl ester + S-adenosyl-L-homocysteine. Its function is as follows. Catalyzes the methyl esterification of L-isoaspartyl residues in peptides and proteins that result from spontaneous decomposition of normal L-aspartyl and L-asparaginyl residues. It plays a role in the repair and/or degradation of damaged proteins. This is Protein-L-isoaspartate O-methyltransferase from Burkholderia ambifaria (strain ATCC BAA-244 / DSM 16087 / CCUG 44356 / LMG 19182 / AMMD) (Burkholderia cepacia (strain AMMD)).